The following is a 501-amino-acid chain: 2-phosphoxylose phosphatase 1 (501 aa).

Topologically, residues 1–6 (MLLRNR) are cytoplasmic. A helical; Signal-anchor for type II membrane protein membrane pass occupies residues 7–27 (FLLLLALAGLLAFLSLSLQFF). Residues 28–501 (SRWLPVSLQL…YYDACHQRLF (474 aa)) are Lumenal-facing. Residue His-120 is the Nucleophile of the active site. Asn-328 and Asn-377 each carry an N-linked (GlcNAc...) asparagine glycan. Catalysis depends on Asp-402, which acts as the Proton donor. N-linked (GlcNAc...) asparagine glycosylation is present at Asn-488.

It belongs to the histidine acid phosphatase family.

It localises to the golgi apparatus membrane. It carries out the reaction 3-O-[beta-D-GlcA-(1-&gt;3)-beta-D-Gal-(1-&gt;3)-beta-D-Gal-(1-&gt;4)-beta-D-2-O-P-Xyl]-L-seryl-[protein] + H2O = 3-O-(beta-D-GlcA-(1-&gt;3)-beta-D-Gal-(1-&gt;3)-beta-D-Gal-(1-&gt;4)-beta-D-Xyl)-L-seryl-[protein] + phosphate. Functionally, responsible for the 2-O-dephosphorylation of xylose in the glycosaminoglycan-protein linkage region of proteoglycans thereby regulating the amount of mature glycosaminoglycan (GAG) chains. Sulfated glycosaminoglycans (GAGs), including heparan sulfate and chondroitin sulfate, are synthesized on the so-called common GAG-protein linkage region (GlcUAbeta1-3Galbeta1-3Galbeta1-4Xylbeta1-O-Ser) of core proteins, which is formed by the stepwise addition of monosaccharide residues by the respective specific glycosyltransferases. Xylose 2-O-dephosphorylation during completion of linkage region formation is a prerequisite for the initiation and efficient elongation of the repeating disaccharide region of GAG chains. The chain is 2-phosphoxylose phosphatase 1 from Xenopus tropicalis (Western clawed frog).